The sequence spans 502 residues: Glutamate--tRNA ligase (502 aa).

The short motif at 9-19 (PSPTGFPHVGT) is the 'HIGH' region element. The 'KMSKS' region motif lies at 250 to 254 (KLSKR). Residue K253 coordinates ATP.

This sequence belongs to the class-I aminoacyl-tRNA synthetase family. Glutamate--tRNA ligase type 1 subfamily. In terms of assembly, monomer.

Its subcellular location is the cytoplasm. It catalyses the reaction tRNA(Glu) + L-glutamate + ATP = L-glutamyl-tRNA(Glu) + AMP + diphosphate. Catalyzes the attachment of glutamate to tRNA(Glu) in a two-step reaction: glutamate is first activated by ATP to form Glu-AMP and then transferred to the acceptor end of tRNA(Glu). In Acinetobacter baylyi (strain ATCC 33305 / BD413 / ADP1), this protein is Glutamate--tRNA ligase.